The following is a 474-amino-acid chain: Light-independent protochlorophyllide reductase subunit N (474 aa).

Positions 22, 47, and 107 each coordinate [4Fe-4S] cluster.

It belongs to the BchN/ChlN family. As to quaternary structure, protochlorophyllide reductase is composed of three subunits; ChlL, ChlN and ChlB. Forms a heterotetramer of two ChlB and two ChlN subunits. It depends on [4Fe-4S] cluster as a cofactor.

Its subcellular location is the plastid. It is found in the chloroplast. It catalyses the reaction chlorophyllide a + oxidized 2[4Fe-4S]-[ferredoxin] + 2 ADP + 2 phosphate = protochlorophyllide a + reduced 2[4Fe-4S]-[ferredoxin] + 2 ATP + 2 H2O. It participates in porphyrin-containing compound metabolism; chlorophyll biosynthesis (light-independent). In terms of biological role, component of the dark-operative protochlorophyllide reductase (DPOR) that uses Mg-ATP and reduced ferredoxin to reduce ring D of protochlorophyllide (Pchlide) to form chlorophyllide a (Chlide). This reaction is light-independent. The NB-protein (ChlN-ChlB) is the catalytic component of the complex. In Physcomitrium patens (Spreading-leaved earth moss), this protein is Light-independent protochlorophyllide reductase subunit N.